Here is a 368-residue protein sequence, read N- to C-terminus: Peptide chain release factor 2 (368 aa).

N5-methylglutamine is present on Gln250.

Belongs to the prokaryotic/mitochondrial release factor family. Post-translationally, methylated by PrmC. Methylation increases the termination efficiency of RF2.

The protein localises to the cytoplasm. In terms of biological role, peptide chain release factor 2 directs the termination of translation in response to the peptide chain termination codons UGA and UAA. The chain is Peptide chain release factor 2 from Rickettsia felis (strain ATCC VR-1525 / URRWXCal2) (Rickettsia azadi).